The sequence spans 294 residues: Pyrroline-5-carboxylate reductase (294 aa).

The protein belongs to the pyrroline-5-carboxylate reductase family.

It localises to the cytoplasm. It carries out the reaction L-proline + NADP(+) = (S)-1-pyrroline-5-carboxylate + NADPH + 2 H(+). It catalyses the reaction L-proline + NAD(+) = (S)-1-pyrroline-5-carboxylate + NADH + 2 H(+). Its pathway is amino-acid biosynthesis; L-proline biosynthesis; L-proline from L-glutamate 5-semialdehyde: step 1/1. Its function is as follows. Catalyzes the reduction of 1-pyrroline-5-carboxylate (PCA) to L-proline. The chain is Pyrroline-5-carboxylate reductase from Mycobacterium leprae (strain TN).